We begin with the raw amino-acid sequence, 193 residues long: Bcl-2-like protein 2 (193 aa).

Residue alanine 2 is modified to N-acetylalanine. A BH4 motif is present at residues 9–29 (DTRALVADFVGYKLRQKGYVC). Positions 85 to 104 (ELFQGGPNWGRLVAFFVFGA) match the BH1 motif. The BH2 signature appears at 136–151 (DWIHSSGGWAEFTALY).

It belongs to the Bcl-2 family. In terms of assembly, interacts with HIF3A (via C-terminus domain). Interacts with BOP.

The protein localises to the mitochondrion membrane. In terms of biological role, promotes cell survival. Blocks dexamethasone-induced apoptosis. Mediates survival of postmitotic Sertoli cells by suppressing death-promoting activity of BAX. This is Bcl-2-like protein 2 (BCL2L2) from Bos taurus (Bovine).